We begin with the raw amino-acid sequence, 779 residues long: Probable ATP-dependent RNA helicase DHX40 (779 aa).

A disordered region spans residues 1-53 (MSRFPAVAGRAPRRQEEGERPVELQEERPSAVRIADREEKGCTSQEGGTTPTF). Positions 13 to 41 (RRQEEGERPVELQEERPSAVRIADREEKG) are enriched in basic and acidic residues. Over residues 42–53 (CTSQEGGTTPTF) the composition is skewed to polar residues. The Helicase ATP-binding domain maps to 63 to 231 (IQAVRDNSFL…FGNCPIFDIP (169 aa)). 76–83 (GNTGSGKT) serves as a coordination point for ATP. The DEAH box signature appears at 173–176 (DEAH). The region spanning 263–442 (TMDIHLNEMA…SVVLTLKCLA (180 aa)) is the Helicase C-terminal domain.

Belongs to the DEAD box helicase family. DEAH subfamily.

The enzyme catalyses ATP + H2O = ADP + phosphate + H(+). In terms of biological role, probable ATP-dependent RNA helicase. The protein is Probable ATP-dependent RNA helicase DHX40 (Dhx40) of Rattus norvegicus (Rat).